A 412-amino-acid chain; its full sequence is Poly-beta-1,6-N-acetyl-D-glucosamine synthase (412 aa).

A run of 4 helical transmembrane segments spans residues 6–28, 290–312, 332–354, and 366–388; these read FLLF…FYFT, LYIL…LYLG, IFLL…ALFI, and LIFV…LVAF.

The protein belongs to the glycosyltransferase 2 family.

It localises to the cell membrane. Its function is as follows. N-acetylglucosaminyltransferase that catalyzes the polymerization of single monomer units of UDP-N-acetylglucosamine to produce the linear homomer poly-beta-1,6-N-acetyl-D-glucosamine (PNAG, also referred to as PIA), a biofilm adhesin polysaccharide. Requires IcaD for full activity. This chain is Poly-beta-1,6-N-acetyl-D-glucosamine synthase (icaA), found in Staphylococcus aureus (strain MSSA476).